A 183-amino-acid chain; its full sequence is A-type ATP synthase subunit E (183 aa).

The protein belongs to the V-ATPase E subunit family. In terms of assembly, has multiple subunits with at least A(3), B(3), C, D, E, F, H, I and proteolipid K(x).

The protein resides in the cell membrane. Its function is as follows. Component of the A-type ATP synthase that produces ATP from ADP in the presence of a proton gradient across the membrane. This is A-type ATP synthase subunit E from Methanosarcina acetivorans (strain ATCC 35395 / DSM 2834 / JCM 12185 / C2A).